The primary structure comprises 345 residues: L-rhamnose-proton symporter (345 aa).

Helical transmembrane passes span 4-24, 38-58, 68-88, 101-121, 131-151, 175-195, 214-234, 259-279, 290-310, and 323-343; these read AITM…CFYA, WSVG…ALLL, FSAA…IGNI, MGIG…TPLL, TAGG…VAIV, LVLA…MDAA, LPSY…FCFI, VLLS…YAWG, ISWM…GLLL, and VLSL…LGMA.

Belongs to the L-rhamnose transporter (TC 2.A.7.6) family.

Its subcellular location is the cell inner membrane. It catalyses the reaction L-rhamnopyranose(in) + H(+)(in) = L-rhamnopyranose(out) + H(+)(out). Functionally, uptake of L-rhamnose across the cytoplasmic membrane with the concomitant transport of protons into the cell (symport system). The sequence is that of L-rhamnose-proton symporter from Cronobacter sakazakii (strain ATCC BAA-894) (Enterobacter sakazakii).